A 1396-amino-acid chain; its full sequence is ABC-type transporter cicA (1396 aa).

The segment at 1-40 (MRLSSEAKIAESGGQPPTAGSRSETGSESTEAESADPKAQ) is disordered. Positions 18 to 29 (TAGSRSETGSES) are enriched in low complexity. A run of 3 helical transmembrane segments spans residues 142-162 (FLLGGFCHLISSLLIVFAPYL), 191-211 (GFVVGITVMQAIQSLCTNQFL), and 300-320 (MFHISWTAPVSIIVALILLLV). Residues 143 to 466 (LLGGFCHLIS…LPLVLGQITD (324 aa)) form the ABC transmembrane type-1 1 domain. Residue asparagine 321 is glycosylated (N-linked (GlcNAc...) asparagine). Helical transmembrane passes span 324–344 (YSALAGFGLLVIGMPFLTYAV), 409–429 (ILCVSMAIPVFASMLSFITYA), and 440–460 (IFSSLALFNSLRMPLNLLPLV). The span at 510 to 533 (AADKEAEKVEKKANPRRTEPKSEA) shows a compositional bias: basic and acidic residues. The disordered stretch occupies residues 510 to 543 (AADKEAEKVEKKANPRRTEPKSEAPTDSAESDEP). Residues 525–751 (RRTEPKSEAP…NDLFKQLMST (227 aa)) form the ABC transporter 1 domain. ATP is bound at residue 563–570 (GTVGSGKS). Asparagine 604 carries an N-linked (GlcNAc...) asparagine glycan. The segment at 751–787 (TASQDSKEDEEEATEVVEEEAEKQAQQEPTKPAAALM) is disordered. A compositionally biased stretch (acidic residues) spans 757 to 771 (KEDEEEATEVVEEEA). 2 consecutive transmembrane segments (helical) span residues 816 to 836 (LAILFLLAFANVVNVWTNLWL) and 852 to 872 (YIGIYAGLGAGSALTMFIFST). Residues 816 to 1093 (LAILFLLAFA…TVRQLAEVEN (278 aa)) enclose the ABC transmembrane type-1 2 domain. The N-linked (GlcNAc...) asparagine glycan is linked to asparagine 880. A run of 4 helical transmembrane segments spans residues 930 to 947 (MYAITITMIVSIMILIIV), 951 to 970 (YFAIALVPLFLLFLTASNYY), 1036 to 1056 (LSVRLDAVAVLLVFVTGVLVV), and 1065 to 1085 (SISGLVLSYILAIAQMLQFTV). N-linked (GlcNAc...) asparagine glycans are attached at residues asparagine 1096, asparagine 1150, and asparagine 1154. Residues 1131–1380 (ITFDNVAMRY…EDGIFRAMCE (250 aa)) enclose the ABC transporter 2 domain. An ATP-binding site is contributed by 1165 to 1172 (GRTGAGKS).

The protein belongs to the ABC transporter superfamily. ABCC family. Conjugate transporter (TC 3.A.1.208) subfamily.

It localises to the cell membrane. ABC-type transporter; part of the gene cluster that mediates the biosynthesis of cichorine, a phytotoxin active against knapweed, corn, and soybeans. CicA is probably involved in the secretion of cichorine. This chain is ABC-type transporter cicA, found in Emericella nidulans (strain FGSC A4 / ATCC 38163 / CBS 112.46 / NRRL 194 / M139) (Aspergillus nidulans).